Reading from the N-terminus, the 123-residue chain is Ragulator complex protein LAMTOR3-A (123 aa).

It belongs to the LAMTOR3 family. Part of the Ragulator complex composed of lamtor1, lamtor2, lamtor3, lamtor4 and lamtor5. The Ragulator complex interacts with slc38a9; the probable amino acid sensor. Component of the lysosomal folliculin complex (LFC).

The protein localises to the late endosome membrane. Functionally, as part of the Ragulator complex it is involved in amino acid sensing and activation of mTORC1, a signaling complex promoting cell growth in response to growth factors, energy levels, and amino acids. Activated by amino acids through a mechanism involving the lysosomal V-ATPase, the Ragulator plays a dual role for the small GTPases Rag (RagA/RRAGA, RagB/RRAGB, RagC/RRAGC and/or RagD/RRAGD): it (1) acts as a guanine nucleotide exchange factor (GEF), activating the small GTPases Rag and (2) mediates recruitment of Rag GTPases to the lysosome membrane. Activated Ragulator and Rag GTPases function as a scaffold recruiting mTORC1 to lysosomes where it is in turn activated. In Xenopus laevis (African clawed frog), this protein is Ragulator complex protein LAMTOR3-A (lamtor3-a).